The following is an 80-amino-acid chain: Large ribosomal subunit protein bL31 (80 aa).

Zn(2+) contacts are provided by C16, C18, C38, and C41.

The protein belongs to the bacterial ribosomal protein bL31 family. Type A subfamily. As to quaternary structure, part of the 50S ribosomal subunit. Requires Zn(2+) as cofactor.

In terms of biological role, binds the 23S rRNA. This Rhodococcus jostii (strain RHA1) protein is Large ribosomal subunit protein bL31.